Here is a 226-residue protein sequence, read N- to C-terminus: NADH-ubiquinone oxidoreductase 19.3 kDa subunit, mitochondrial (226 aa).

The segment at 40-68 (ATGAVAPAGAQHGIARRERREVPLPSQEG) is disordered. Residues C101, C102, C166, and C196 each coordinate [4Fe-4S] cluster.

This sequence belongs to the complex I 20 kDa subunit family. As to quaternary structure, complex I is composed of about 40 different subunits. This is a component of the iron-sulfur (IP) fragment of the enzyme. [4Fe-4S] cluster is required as a cofactor.

It is found in the mitochondrion. The catalysed reaction is a ubiquinone + NADH + 5 H(+)(in) = a ubiquinol + NAD(+) + 4 H(+)(out). Functionally, core subunit of the mitochondrial membrane respiratory chain NADH dehydrogenase (Complex I) that is believed to belong to the minimal assembly required for catalysis. Complex I functions in the transfer of electrons from NADH to the respiratory chain. The immediate electron acceptor for the enzyme is believed to be ubiquinone. In Neurospora crassa (strain ATCC 24698 / 74-OR23-1A / CBS 708.71 / DSM 1257 / FGSC 987), this protein is NADH-ubiquinone oxidoreductase 19.3 kDa subunit, mitochondrial.